A 466-amino-acid chain; its full sequence is Ribulose bisphosphate carboxylase large chain (466 aa).

Lys-5 carries the post-translational modification N6,N6,N6-trimethyllysine. 2 residues coordinate substrate: Asn-114 and Thr-164. The active-site Proton acceptor is the Lys-166. Lys-168 serves as a coordination point for substrate. 3 residues coordinate Mg(2+): Lys-192, Asp-194, and Glu-195. Position 192 is an N6-carboxylysine (Lys-192). The active-site Proton acceptor is the His-285. Substrate contacts are provided by Arg-286, His-318, and Ser-370.

The protein belongs to the RuBisCO large chain family. Type I subfamily. As to quaternary structure, heterohexadecamer of 8 large chains and 8 small chains; disulfide-linked. The disulfide link is formed within the large subunit homodimers. The cofactor is Mg(2+). In terms of processing, the disulfide bond which can form in the large chain dimeric partners within the hexadecamer appears to be associated with oxidative stress and protein turnover.

Its subcellular location is the plastid. It localises to the chloroplast. The enzyme catalyses 2 (2R)-3-phosphoglycerate + 2 H(+) = D-ribulose 1,5-bisphosphate + CO2 + H2O. It catalyses the reaction D-ribulose 1,5-bisphosphate + O2 = 2-phosphoglycolate + (2R)-3-phosphoglycerate + 2 H(+). In terms of biological role, ruBisCO catalyzes two reactions: the carboxylation of D-ribulose 1,5-bisphosphate, the primary event in carbon dioxide fixation, as well as the oxidative fragmentation of the pentose substrate in the photorespiration process. Both reactions occur simultaneously and in competition at the same active site. In Moringa oleifera (Horseradish tree), this protein is Ribulose bisphosphate carboxylase large chain.